Reading from the N-terminus, the 187-residue chain is UPF0301 protein Shewmr7_1270 (187 aa).

It belongs to the UPF0301 (AlgH) family.

This is UPF0301 protein Shewmr7_1270 from Shewanella sp. (strain MR-7).